We begin with the raw amino-acid sequence, 114 residues long: T cell receptor beta variable 5-8 (114 aa).

A signal peptide spans 1–21 (MGPRLLFWALLCLLGTGPVEA). Residues 22–114 (GVTQSPTHLI…SALYLCASSL (93 aa)) form the Ig-like domain. A disulfide bond links Cys42 and Cys110. Asn90 carries N-linked (GlcNAc...) asparagine glycosylation.

As to quaternary structure, alpha-beta TR is a heterodimer composed of an alpha and beta chain; disulfide-linked. The alpha-beta TR is associated with the transmembrane signaling CD3 coreceptor proteins to form the TR-CD3 (TcR or TCR). The assembly of alpha-beta TR heterodimers with CD3 occurs in the endoplasmic reticulum where a single alpha-beta TR heterodimer associates with one CD3D-CD3E heterodimer, one CD3G-CD3E heterodimer and one CD247 homodimer forming a stable octameric structure. CD3D-CD3E and CD3G-CD3E heterodimers preferentially associate with TR alpha and TR beta chains, respectively. The association of the CD247 homodimer is the last step of TcR assembly in the endoplasmic reticulum and is required for transport to the cell surface.

The protein localises to the cell membrane. In terms of biological role, v region of the variable domain of T cell receptor (TR) beta chain that participates in the antigen recognition. Alpha-beta T cell receptors are antigen specific receptors which are essential to the immune response and are present on the cell surface of T lymphocytes. Recognize peptide-major histocompatibility (MH) (pMH) complexes that are displayed by antigen presenting cells (APC), a prerequisite for efficient T cell adaptive immunity against pathogens. Binding of alpha-beta TR to pMH complex initiates TR-CD3 clustering on the cell surface and intracellular activation of LCK that phosphorylates the ITAM motifs of CD3G, CD3D, CD3E and CD247 enabling the recruitment of ZAP70. In turn ZAP70 phosphorylates LAT, which recruits numerous signaling molecules to form the LAT signalosome. The LAT signalosome propagates signal branching to three major signaling pathways, the calcium, the mitogen-activated protein kinase (MAPK) kinase and the nuclear factor NF-kappa-B (NF-kB) pathways, leading to the mobilization of transcription factors that are critical for gene expression and essential for T cell growth and differentiation. The T cell repertoire is generated in the thymus, by V-(D)-J rearrangement. This repertoire is then shaped by intrathymic selection events to generate a peripheral T cell pool of self-MH restricted, non-autoaggressive T cells. Post-thymic interaction of alpha-beta TR with the pMH complexes shapes TR structural and functional avidity. The protein is T cell receptor beta variable 5-8 of Homo sapiens (Human).